Consider the following 530-residue polypeptide: Ubiquitin carboxyl-terminal hydrolase 17-like protein 20 (530 aa).

Residues 80–375 form the USP domain; that stretch reads AGLQNMGNTC…QAYVLFYIQK (296 aa). Catalysis depends on Cys-89, which acts as the Nucleophile. The active-site Proton acceptor is His-334. Composition is skewed to basic and acidic residues over residues 382 to 392 and 398 to 413; these read SESVSRGREPR and DTDRRATQGELKRDHP. Disordered regions lie at residues 382 to 413 and 509 to 530; these read SESVSRGREPRALGAEDTDRRATQGELKRDHP and RGRARRSKGKNKHSKRALLVCQ. Basic residues predominate over residues 510–524; the sequence is GRARRSKGKNKHSKR.

It belongs to the peptidase C19 family. USP17 subfamily.

It is found in the nucleus. It localises to the endoplasmic reticulum. The enzyme catalyses Thiol-dependent hydrolysis of ester, thioester, amide, peptide and isopeptide bonds formed by the C-terminal Gly of ubiquitin (a 76-residue protein attached to proteins as an intracellular targeting signal).. In terms of biological role, deubiquitinating enzyme that removes conjugated ubiquitin from specific proteins to regulate different cellular processes that may include cell proliferation, progression through the cell cycle, apoptosis, cell migration, and the cellular response to viral infection. The polypeptide is Ubiquitin carboxyl-terminal hydrolase 17-like protein 20 (USP17L20) (Homo sapiens (Human)).